A 149-amino-acid polypeptide reads, in one-letter code: Macrodomain Ter protein (149 aa).

This sequence belongs to the MatP family. As to quaternary structure, homodimer.

The protein localises to the cytoplasm. Its function is as follows. Required for spatial organization of the terminus region of the chromosome (Ter macrodomain) during the cell cycle. Prevents early segregation of duplicated Ter macrodomains during cell division. Binds specifically to matS, which is a 13 bp signature motif repeated within the Ter macrodomain. The chain is Macrodomain Ter protein from Vibrio vulnificus (strain YJ016).